The primary structure comprises 31 residues: Potassium channel toxin alpha-KTx 19.2 (31 aa).

3 cysteine pairs are disulfide-bonded: cysteine 3–cysteine 22, cysteine 8–cysteine 27, and cysteine 12–cysteine 29.

The protein belongs to the short scorpion toxin superfamily. Potassium channel inhibitor family. Alpha-KTx 19 subfamily. As to quaternary structure, monomer. Expressed by the venom gland.

It localises to the secreted. Blocks voltage-gated potassium channels rKv1.1/KCNA1, rKv1.2/KCNA2, hKv1.3/KCNA3, rKv1.6/KCNA6 (IC(50)=75.9 nM) and, to a lesser extent, Shaker IR (with the inactivation domain removed). The polypeptide is Potassium channel toxin alpha-KTx 19.2 (Buthus occitanus tunetanus (Common European scorpion)).